Reading from the N-terminus, the 137-residue chain is SPbeta prophage-derived disulfide bond formation protein A (137 aa).

The first 25 residues, 1 to 25, serve as a signal peptide directing secretion; it reads MKKWIVLFLVLIAAAISIFVYVSTG. The region spanning 26 to 136 is the Thioredoxin domain; sequence SEKPFYNDIN…IEKFFDKNGD (111 aa). A disulfide bridge connects residues cysteine 58 and cysteine 61.

This sequence belongs to the thioredoxin family.

It localises to the secreted. In terms of biological role, unknown; dispensable for production of the lantibiotic sublancin 168 and for competence for DNA uptake. The chain is SPbeta prophage-derived disulfide bond formation protein A (bdbA) from Bacillus subtilis (strain 168).